Consider the following 240-residue polypeptide: tRNA (guanine-N(1)-)-methyltransferase (240 aa).

S-adenosyl-L-methionine is bound by residues G108 and 127 to 132; that span reads LGDFIL.

The protein belongs to the RNA methyltransferase TrmD family. In terms of assembly, homodimer.

It localises to the cytoplasm. It catalyses the reaction guanosine(37) in tRNA + S-adenosyl-L-methionine = N(1)-methylguanosine(37) in tRNA + S-adenosyl-L-homocysteine + H(+). Its function is as follows. Specifically methylates guanosine-37 in various tRNAs. In Streptococcus mutans serotype c (strain ATCC 700610 / UA159), this protein is tRNA (guanine-N(1)-)-methyltransferase.